Consider the following 261-residue polypeptide: Proteasome assembly chaperone 2 (261 aa).

It belongs to the PSMG2 family. Forms a heterodimer with psmg1. Degraded by the proteasome upon completion of 20S proteasome maturation.

The protein resides in the nucleus. Functionally, chaperone protein which promotes assembly of the 20S proteasome as part of a heterodimer with psmg1. The chain is Proteasome assembly chaperone 2 from Xenopus tropicalis (Western clawed frog).